The sequence spans 124 residues: Ribonuclease pancreatic (124 aa).

Basic and acidic residues predominate over residues 1 to 13 (KESAAAKFERQHM). The tract at residues 1-24 (KESAAAKFERQHMDPSTSSASSSN) is disordered. Substrate is bound by residues Lys7 and Arg10. Catalysis depends on His12, which acts as the Proton acceptor. 4 cysteine pairs are disulfide-bonded: Cys26-Cys84, Cys40-Cys95, Cys58-Cys110, and Cys65-Cys72. Substrate-binding positions include 41-45 (KPVNT), Lys66, and Arg85. His119 (proton donor) is an active-site residue.

It belongs to the pancreatic ribonuclease family. As to quaternary structure, monomer. Interacts with and forms tight 1:1 complexes with RNH1. Dimerization of two such complexes may occur. Interaction with RNH1 inhibits this protein. Pancreas.

It is found in the secreted. It carries out the reaction an [RNA] containing cytidine + H2O = an [RNA]-3'-cytidine-3'-phosphate + a 5'-hydroxy-ribonucleotide-3'-[RNA].. The enzyme catalyses an [RNA] containing uridine + H2O = an [RNA]-3'-uridine-3'-phosphate + a 5'-hydroxy-ribonucleotide-3'-[RNA].. Functionally, endonuclease that catalyzes the cleavage of RNA on the 3' side of pyrimidine nucleotides. Acts on single-stranded and double-stranded RNA. In Cervus elaphus (Red deer), this protein is Ribonuclease pancreatic (RNASE1).